A 107-amino-acid chain; its full sequence is Holo-[acyl-carrier-protein] synthase (107 aa).

Residues aspartate 10 and glutamate 54 each contribute to the Mg(2+) site.

It belongs to the P-Pant transferase superfamily. AcpS family. The cofactor is Mg(2+).

Its subcellular location is the cytoplasm. It catalyses the reaction apo-[ACP] + CoA = holo-[ACP] + adenosine 3',5'-bisphosphate + H(+). In terms of biological role, transfers the 4'-phosphopantetheine moiety from coenzyme A to a Ser of acyl-carrier-protein. This chain is Holo-[acyl-carrier-protein] synthase, found in Mycoplasma mobile (strain ATCC 43663 / 163K / NCTC 11711) (Mesomycoplasma mobile).